A 129-amino-acid polypeptide reads, in one-letter code: MKKIIETQRAPGAIGPYVQGVDLGSMVFTSGQIPVCPQTGEIPADVQDQARLSLENVKAIVVAAGLSVGDIIKMTVFITDLNDFATINEVYKQFFDEHQATYPTRSCVQVARLPKDVKLEIEAIAVRSA.

Residue lysine 58 is modified to N6-(pyridoxal phosphate)lysine. Residues 105 to 107 (RSC) and glutamate 120 contribute to the substrate site.

It belongs to the RutC family. In terms of assembly, homotrimer.

It functions in the pathway amino-acid degradation; L-threonine degradation via propanoate pathway. Functionally, may be a post-translational regulator that controls the metabolic fate of L-threonine or the potentially toxic intermediate 2-ketobutyrate. In Escherichia coli O6:H1 (strain CFT073 / ATCC 700928 / UPEC), this protein is Putative reactive intermediate deaminase TdcF (tdcF).